The following is a 344-amino-acid chain: Endoplasmic reticulum junction formation protein lunapark-1 (344 aa).

Residues 1–39 (MGNLFSRTKSPATELERVVLSIEDFKKRLQTISASNSST) lie on the Cytoplasmic side of the membrane. The chain crosses the membrane as a helical span at residues 40–60 (LYYYYMGVIIILSIAMAHTWL). The Lumenal segment spans residues 61-68 (RFDDPTKT). A helical transmembrane segment spans residues 69-89 (YVACALVFGATVIVLTGRYII). The Cytoplasmic portion of the chain corresponds to 90–344 (NCFFAWRTNR…ADETAVVEKS (255 aa)). The stretch at 116-140 (DLVKETLKFKEAKEILDRYEEKTEA) forms a coiled coil. Disordered stretches follow at residues 136-155 (EKTE…HQQK) and 171-192 (QKRV…IAFD). Residues 140 to 155 (AGNTPTENSKLIHQQK) show a composition bias toward polar residues. The segment at 239 to 264 (CSICHTHNGMSVPAEYPFISFRCFEC) adopts a C4-type; plays a role in ER morphology zinc-finger fold. The tract at residues 275-344 (PHLPITRPPM…ADETAVVEKS (70 aa)) is disordered. Polar residues predominate over residues 312-326 (PNPSTDLTPSASQHG). Residues 327-344 (SDSEPEKNADETAVVEKS) are compositionally biased toward basic and acidic residues.

The protein belongs to the lunapark family.

It localises to the endoplasmic reticulum membrane. In terms of biological role, plays a role in tubular endoplasmic reticulum network formation and maintenance. May be involved in central nervous system development. Has a presynaptic role in neurotransmission. Likely to operate in synaptogenesis by regulating vesicular transport or localization. Required for correct localization of rab-3 and snb-1. This chain is Endoplasmic reticulum junction formation protein lunapark-1, found in Caenorhabditis briggsae.